Reading from the N-terminus, the 93-residue chain is U12-lycotoxin-Ls1b (93 aa).

The first 18 residues, 1–18, serve as a signal peptide directing secretion; the sequence is MKFAVILLFSLVVLAVAS. Residues 19–38 constitute a propeptide that is removed on maturation; it reads ESVEEVRREIDIEDLPEQQR.

It belongs to the neurotoxin 31 family. Post-translationally, contains 5 disulfide bonds. As to expression, expressed by the venom gland.

The protein resides in the secreted. The protein is U12-lycotoxin-Ls1b of Lycosa singoriensis (Wolf spider).